The chain runs to 319 residues: Mercury resistance probable Hg transport protein (319 aa).

Hg(2+) contacts are provided by C298, C299, C318, and C319.

In Streptomyces lividans, this protein is Mercury resistance probable Hg transport protein.